The following is a 247-amino-acid chain: Probable chemoreceptor glutamine deamidase CheD (247 aa).

Residues 204 to 247 (KRPAAPQPARPRIELFGGRGTAPGAGSPSAGSPYAANLSRKQEA) form a disordered region. Over residues 227-239 (GAGSPSAGSPYAA) the composition is skewed to low complexity.

The protein belongs to the CheD family.

It catalyses the reaction L-glutaminyl-[protein] + H2O = L-glutamyl-[protein] + NH4(+). Functionally, probably deamidates glutamine residues to glutamate on methyl-accepting chemotaxis receptors (MCPs), playing an important role in chemotaxis. This Burkholderia orbicola (strain AU 1054) protein is Probable chemoreceptor glutamine deamidase CheD.